Consider the following 378-residue polypeptide: Succinyl-diaminopimelate desuccinylase (378 aa).

Zn(2+) is bound at residue H68. The active site involves D70. A Zn(2+)-binding site is contributed by D101. The active-site Proton acceptor is the E135. Positions 136, 164, and 350 each coordinate Zn(2+).

This sequence belongs to the peptidase M20A family. DapE subfamily. As to quaternary structure, homodimer. It depends on Zn(2+) as a cofactor. Co(2+) is required as a cofactor.

It carries out the reaction N-succinyl-(2S,6S)-2,6-diaminopimelate + H2O = (2S,6S)-2,6-diaminopimelate + succinate. Its pathway is amino-acid biosynthesis; L-lysine biosynthesis via DAP pathway; LL-2,6-diaminopimelate from (S)-tetrahydrodipicolinate (succinylase route): step 3/3. Catalyzes the hydrolysis of N-succinyl-L,L-diaminopimelic acid (SDAP), forming succinate and LL-2,6-diaminopimelate (DAP), an intermediate involved in the bacterial biosynthesis of lysine and meso-diaminopimelic acid, an essential component of bacterial cell walls. This is Succinyl-diaminopimelate desuccinylase from Vibrio parahaemolyticus serotype O3:K6 (strain RIMD 2210633).